The following is a 257-amino-acid chain: MFNKMRKTKEKDVPVTKEEVLRHPMPNHVAIIMDGNGRWAKKRALPRAAGHYEGMQVVRKITRFANELGIQILSLYAFSTENWKRPKSEVDYLMKLPEQFLTTFLPELVAENVKVQVIGHTEALPDHTRRAVEKAVKETSGNTGLVLNFALNYGSRAEIAAAVKQIAKDVERGMLAPEDITEPLISSYLMTSGLADPDLLIRTSGEIRLSNFMLWQLAYTELWFTDVLWPDFTEQHFLEAIAAYQRRDRRFGGVSAR.

Aspartate 34 is a catalytic residue. Aspartate 34 contacts Mg(2+). Substrate is bound by residues 35–38 (GNGR), tryptophan 39, arginine 47, histidine 51, and 79–81 (STE). Asparagine 82 functions as the Proton acceptor in the catalytic mechanism. Substrate-binding positions include tryptophan 83, arginine 85, arginine 202, and 208–210 (RLS). Glutamate 221 is a Mg(2+) binding site.

This sequence belongs to the UPP synthase family. In terms of assembly, homodimer. It depends on Mg(2+) as a cofactor.

Catalyzes the condensation of isopentenyl diphosphate (IPP) with allylic pyrophosphates generating different type of terpenoids. This Geobacillus kaustophilus (strain HTA426) protein is Isoprenyl transferase.